Consider the following 901-residue polypeptide: MSILTRIFGSRNERVLRKLKKQVVKINKMEPAFEALSDDELKAKTQEFRDRLSGGETLQQILPEAFATVREASKRVLGMRHFDVQLIGGMVLTNRCIAEMRTGEGKTLTATLPCYLIALEGKGVHVVTVNDYLARRDAETNRPLFEFLGMSVGVNIPGLSPEEKREAYAADITYATNSELGFDYLRDNLAHSKEERFQRTLGYALVDEVDSILIDEARTPLIISGQAEKSSELYIAVNKLIPSLIKQEKEDTEEYQGEGDFTLDLKSKQAHLTERGQEKVEDWLIAQGLMPEGDSLYSPSRIVLLHHVMAALRAHTLFEKDVDYIVKDGEIVIVDEHTGRTMAGRRWSDGLHQAIEAKEGVDIKSENQTVASISYQNYFRLYERLAGMTGTADTEAFEFQQIYGLETVVIPTNRPMIRDDRTDVMFENEQYKFNAIIEDIKDCVERQQPVLVGTISVEKSEELSKALDKAGIKHNVLNAKFHQQEAEIVAEAGFPSAVTIATNMAGRGTDIILGGNWKAQAAKLENPTQEQIEALKAEWEKNHEIVMKAGGLHIIGTERHESRRIDNQLRGRSGRQGDPGSSRFYLSLEDGLMRIYLNEGKRNLMRKAFTVAGEAMESKMLAKVIASAQAKVEAFHFDGRKNLLEYDDVANDQRHAIYEQRNYLLDNDDISETINAIRHDVFNGVIDQYIPPQSLEEQWDIKGLEERLSQEFGMELPISNWLEEDNNLHEESLRERIVEIAEKEYKEKEALVGEDAMHHFEKGVMLQTLDELWKEHLASMDYLRQGIHLRGYAQKDPKQEYKKESFRMFTEMLDSLKHHVIMTLTRVRVRTQEEMEEAELARQEMATRINQNNLPVDENSQTTQNSETEDYSDRRIGRNEPCPCGSGKKYKHCHGSRVARQ.

ATP contacts are provided by residues Q85, 103–107 (GEGKT), and D510. Positions 847-901 (TRINQNNLPVDENSQTTQNSETEDYSDRRIGRNEPCPCGSGKKYKHCHGSRVARQ) are disordered. The segment covering 848–866 (RINQNNLPVDENSQTTQNS) has biased composition (polar residues). Zn(2+) is bound by residues C882, C884, C893, and H894. The span at 888–901 (KKYKHCHGSRVARQ) shows a compositional bias: basic residues.

This sequence belongs to the SecA family. Monomer and homodimer. Part of the essential Sec protein translocation apparatus which comprises SecA, SecYEG and auxiliary proteins SecDF-YajC and YidC. It depends on Zn(2+) as a cofactor.

Its subcellular location is the cell inner membrane. The protein resides in the cytoplasm. It catalyses the reaction ATP + H2O + cellular proteinSide 1 = ADP + phosphate + cellular proteinSide 2.. Part of the Sec protein translocase complex. Interacts with the SecYEG preprotein conducting channel. Has a central role in coupling the hydrolysis of ATP to the transfer of proteins into and across the cell membrane, serving both as a receptor for the preprotein-SecB complex and as an ATP-driven molecular motor driving the stepwise translocation of polypeptide chains across the membrane. The polypeptide is Protein translocase subunit SecA (Haemophilus influenzae (strain PittGG)).